Consider the following 641-residue polypeptide: Mannosyl-oligosaccharide 1,2-alpha-mannosidase IB (641 aa).

Position 2 is an N-acetylthreonine (threonine 2). Over 2-36 the chain is Cytoplasmic; that stretch reads TTPALLPLSGRRIPPLNLGPPSFPHHRATLRLSEK. The chain crosses the membrane as a helical; Signal-anchor for type II membrane protein span at residues 37-57; sequence FILLLILSAFITLCFGAFFFL. Over 58–641 the chain is Lumenal; that stretch reads PDSSKHKRFD…TTLSGNPAVR (584 aa). The disordered stretch occupies residues 153–175; sequence NKPLPPVPIPNLVGIRGGDPEDN. Cysteines 462 and 494 form a disulfide. The active-site Proton donor is glutamate 508. Threonine 619 contacts Ca(2+). An N-linked (GlcNAc...) asparagine glycan is attached at asparagine 631.

This sequence belongs to the glycosyl hydrolase 47 family. It depends on Ca(2+) as a cofactor. As to expression, highest levels of expression in placenta and testis.

It localises to the golgi apparatus membrane. The catalysed reaction is N(4)-(alpha-D-Man-(1-&gt;2)-alpha-D-Man-(1-&gt;2)-alpha-D-Man-(1-&gt;3)-[alpha-D-Man-(1-&gt;2)-alpha-D-Man-(1-&gt;3)-[alpha-D-Man-(1-&gt;2)-alpha-D-Man-(1-&gt;6)]-alpha-D-Man-(1-&gt;6)]-beta-D-Man-(1-&gt;4)-beta-D-GlcNAc-(1-&gt;4)-beta-D-GlcNAc)-L-asparaginyl-[protein] (N-glucan mannose isomer 9A1,2,3B1,2,3) + 4 H2O = N(4)-(alpha-D-Man-(1-&gt;3)-[alpha-D-Man-(1-&gt;3)-[alpha-D-Man-(1-&gt;6)]-alpha-D-Man-(1-&gt;6)]-beta-D-Man-(1-&gt;4)-beta-D-GlcNAc-(1-&gt;4)-beta-D-GlcNAc)-L-asparaginyl-[protein] (N-glucan mannose isomer 5A1,2) + 4 beta-D-mannose. The enzyme catalyses N(4)-(alpha-D-Man-(1-&gt;2)-alpha-D-Man-(1-&gt;2)-alpha-D-Man-(1-&gt;3)-[alpha-D-Man-(1-&gt;3)-[alpha-D-Man-(1-&gt;2)-alpha-D-Man-(1-&gt;6)]-alpha-D-Man-(1-&gt;6)]-beta-D-Man-(1-&gt;4)-beta-D-GlcNAc-(1-&gt;4)-beta-D-GlcNAc)-L-asparaginyl-[protein] (N-glucan mannose isomer 8A1,2,3B1,3) + 3 H2O = N(4)-(alpha-D-Man-(1-&gt;3)-[alpha-D-Man-(1-&gt;3)-[alpha-D-Man-(1-&gt;6)]-alpha-D-Man-(1-&gt;6)]-beta-D-Man-(1-&gt;4)-beta-D-GlcNAc-(1-&gt;4)-beta-D-GlcNAc)-L-asparaginyl-[protein] (N-glucan mannose isomer 5A1,2) + 3 beta-D-mannose. It functions in the pathway protein modification; protein glycosylation. Its activity is regulated as follows. Inhibited by both 1-deoxymannojirimycin and kifunensine. Its function is as follows. Involved in the maturation of Asn-linked oligosaccharides. Progressively trim alpha-1,2-linked mannose residues from Man(9)GlcNAc(2) to produce Man(5)GlcNAc(2). This is Mannosyl-oligosaccharide 1,2-alpha-mannosidase IB (MAN1A2) from Homo sapiens (Human).